The sequence spans 235 residues: Protein GrpE (235 aa).

Over residues 1-18 the composition is skewed to polar residues; sequence MTDGNQKPDGNSGEQVTV. 2 disordered regions span residues 1–50 and 198–235; these read MTDG…DAAH and ESVDDGTAVADTAENDQADQGNSADTLGEQAESEPSGS. A compositionally biased stretch (basic and acidic residues) spans 19 to 35; sequence TDKRRIDPETGEVRHVP.

The protein belongs to the GrpE family. Homodimer.

It is found in the cytoplasm. In terms of biological role, participates actively in the response to hyperosmotic and heat shock by preventing the aggregation of stress-denatured proteins, in association with DnaK and GrpE. It is the nucleotide exchange factor for DnaK and may function as a thermosensor. Unfolded proteins bind initially to DnaJ; upon interaction with the DnaJ-bound protein, DnaK hydrolyzes its bound ATP, resulting in the formation of a stable complex. GrpE releases ADP from DnaK; ATP binding to DnaK triggers the release of the substrate protein, thus completing the reaction cycle. Several rounds of ATP-dependent interactions between DnaJ, DnaK and GrpE are required for fully efficient folding. This chain is Protein GrpE, found in Mycobacterium bovis (strain BCG / Pasteur 1173P2).